The primary structure comprises 480 residues: Acetyl-coenzyme A carboxylase carboxyl transferase subunit beta, chloroplastic (480 aa).

The tract at residues 25-48 (TSSLGPIENASESKDPNINDTDKN) is disordered. The span at 35–47 (SESKDPNINDTDK) shows a compositional bias: basic and acidic residues. In terms of domain architecture, CoA carboxyltransferase N-terminal spans 216 to 480 (LWVQCENCYG…LHTFFPLNQN (265 aa)). Zn(2+) is bound by residues cysteine 220, cysteine 223, cysteine 239, and cysteine 242. The C4-type zinc finger occupies 220-242 (CENCYGLNYKKFFKSKMNLCEQC).

This sequence belongs to the AccD/PCCB family. In terms of assembly, acetyl-CoA carboxylase is a heterohexamer composed of biotin carboxyl carrier protein, biotin carboxylase and 2 subunits each of ACCase subunit alpha and ACCase plastid-coded subunit beta (accD). Zn(2+) is required as a cofactor.

The protein localises to the plastid. Its subcellular location is the chloroplast stroma. It carries out the reaction N(6)-carboxybiotinyl-L-lysyl-[protein] + acetyl-CoA = N(6)-biotinyl-L-lysyl-[protein] + malonyl-CoA. Its pathway is lipid metabolism; malonyl-CoA biosynthesis; malonyl-CoA from acetyl-CoA: step 1/1. In terms of biological role, component of the acetyl coenzyme A carboxylase (ACC) complex. Biotin carboxylase (BC) catalyzes the carboxylation of biotin on its carrier protein (BCCP) and then the CO(2) group is transferred by the transcarboxylase to acetyl-CoA to form malonyl-CoA. The chain is Acetyl-coenzyme A carboxylase carboxyl transferase subunit beta, chloroplastic from Helianthus annuus (Common sunflower).